Reading from the N-terminus, the 147-residue chain is UPF0306 protein YhbP (147 aa).

Belongs to the UPF0306 family.

In Salmonella agona (strain SL483), this protein is UPF0306 protein YhbP.